Consider the following 346-residue polypeptide: Methylthioribose-1-phosphate isomerase (346 aa).

Residues 46–48, Arg89, and Gln196 each bind substrate; that span reads RGA. Asp237 acts as the Proton donor in catalysis. Residue 247–248 participates in substrate binding; that stretch reads NK.

It belongs to the eIF-2B alpha/beta/delta subunits family. MtnA subfamily.

The enzyme catalyses 5-(methylsulfanyl)-alpha-D-ribose 1-phosphate = 5-(methylsulfanyl)-D-ribulose 1-phosphate. The protein operates within amino-acid biosynthesis; L-methionine biosynthesis via salvage pathway; L-methionine from S-methyl-5-thio-alpha-D-ribose 1-phosphate: step 1/6. Functionally, catalyzes the interconversion of methylthioribose-1-phosphate (MTR-1-P) into methylthioribulose-1-phosphate (MTRu-1-P). This chain is Methylthioribose-1-phosphate isomerase, found in Geotalea uraniireducens (strain Rf4) (Geobacter uraniireducens).